Reading from the N-terminus, the 886-residue chain is Cadherin-1 (886 aa).

The first 23 residues, 1–23 (MGARCRSFSALLLLLQVSSWLCQ), serve as a signal peptide directing secretion. A propeptide spanning residues 24 to 158 (QPESESDSCR…FHQGLRRQKR (135 aa)) is cleaved from the precursor. The Extracellular portion of the chain corresponds to 24-713 (QPESESDSCR…SLEAGLQVPA (690 aa)). Cadherin domains lie at 159 to 266 (DWVI…RPEF), 267 to 379 (IQEV…APIF), 380 to 490 (NPST…APIF), 491 to 597 (VPAE…DNAP), and 598 to 701 (IPEP…NCMK). Residue D261 participates in Ca(2+) binding. S284 and S289 each carry an O-linked (Man...) serine glycan. D292 contributes to the Ca(2+) binding site. O-linked (Man...) threonine glycans are attached at residues T362, T474, T476, and T513. N-linked (GlcNAc...) asparagine glycosylation is present at N562. 3 O-linked (Man...) threonine glycosylation sites follow: T580, T582, and T584. Residue N641 is glycosylated (N-linked (GlcNAc...) asparagine). Residues 714 to 734 (ILGILGGILALLILILLLLLF) form a helical membrane-spanning segment. At 735 to 886 (LRRRTVVKEP…ADMYGGGEED (152 aa)) the chain is on the cytoplasmic side. The segment at 751–771 (DTRDNVYYYDEEGGGEEDQDF) is disordered. Residues Y757, Y758, and Y759 each carry the phosphotyrosine; by SRC modification. Residues 759 to 771 (YDEEGGGEEDQDF) show a composition bias toward acidic residues. The tract at residues 762-773 (EGGGEEDQDFDL) is required for binding CTNND1 and PSEN1. Residues S774, S797, S842, S844, and S850 each carry the phosphoserine modification. The segment at 815–886 (IDENLKAADS…ADMYGGGEED (72 aa)) is required for binding alpha, beta and.

In terms of assembly, homodimer; disulfide-linked. Component of an E-cadherin/ catenin adhesion complex composed of at least E-cadherin/CDH1, beta-catenin/CTNNB1 or gamma-catenin/JUP, and potentially alpha-catenin/CTNNA1; the complex is located to adherens junctions. Found in a complex composed of CDH1, RAP1A and PKP3; PKP3 acts as a scaffold protein within the complex, the complex is required for CDH1 localization to mature desmosome cell junctions. Interacts with the TRPV4 and CTNNB1 complex. Interacts with CTNND1. The stable association of CTNNA1 is controversial as CTNNA1 was shown not to bind to F-actin when assembled in the complex. Alternatively, the CTNNA1-containing complex may be linked to F-actin by other proteins such as LIMA1. Interaction with PSEN1, cleaves CDH1 resulting in the disassociation of cadherin-based adherens junctions (CAJs). Interacts with AJAP1 and DLGAP5. Interacts with TBC1D2. Interacts with LIMA1. Interacts with CAV1. Interacts with PIP5K1C. Interacts with DDR1; this stabilizes CDH1 at the cell surface and inhibits its internalization. Interacts with RAPGEF2. Interacts with RAB8B. Interacts with KLRG1. Forms a ternary complex composed of ADAM10, CADH1 and EPHA4; within the complex, CADH1 is cleaved by ADAM10 which disrupts adherens junctions. Interacts with SPEF1. Interacts with CTNNB1 and PKP2. Interacts with AMOTL2; the interaction may facilitate binding of radial actin fibers to cell junction complexes. Interacts with DSG3; the interaction is required for CDH1 localization to developing adherens junctions. Post-translationally, during apoptosis or with calcium influx, cleaved by a membrane-bound metalloproteinase (ADAM10), PS1/gamma-secretase and caspase-3. Processing by the metalloproteinase, induced by calcium influx, causes disruption of cell-cell adhesion and the subsequent release of beta-catenin into the cytoplasm. The residual membrane-tethered cleavage product is rapidly degraded via an intracellular proteolytic pathway. Cleavage by caspase-3 releases the cytoplasmic tail resulting in disintegration of the actin microfilament system. The gamma-secretase-mediated cleavage promotes disassembly of adherens junctions. During development of the cochlear organ of Corti, cleavage by ADAM10 at adherens junctions promotes pillar cell separation. In terms of processing, N-glycosylation at Asn-641 is essential for expression, folding and trafficking. Addition of bisecting N-acetylglucosamine by MGAT3 modulates its cell membrane location. Ubiquitinated by a SCF complex containing SKP2, which requires prior phosphorylation by CK1/CSNK1A1. Ubiquitinated by CBLL1/HAKAI, requires prior phosphorylation at Tyr-758. Post-translationally, O-glycosylated. O-manosylated by TMTC1, TMTC2, TMTC3 or TMTC4. Ser-289 and Thr-513 are O-manosylated by TMTC2 or TMTC4 but not TMTC1 or TMTC3.

The protein localises to the cell junction. The protein resides in the adherens junction. Its subcellular location is the cell membrane. It localises to the endosome. It is found in the golgi apparatus. The protein localises to the trans-Golgi network. The protein resides in the cytoplasm. Its subcellular location is the desmosome. In terms of biological role, cadherins are calcium-dependent cell adhesion proteins. They preferentially interact with themselves in a homophilic manner in connecting cells; cadherins may thus contribute to the sorting of heterogeneous cell types. CDH1 is involved in mechanisms regulating cell-cell adhesions, mobility and proliferation of epithelial cells. Promotes organization of radial actin fiber structure and cellular response to contractile forces, via its interaction with AMOTL2 which facilitates anchoring of radial actin fibers to CDH1 junction complexes at the cell membrane. Plays a role in the early stages of desmosome cell-cell junction formation via facilitating the recruitment of DSG2 and DSP to desmosome plaques. Has a potent invasive suppressor role. It is a ligand for integrin alpha-E/beta-7. Its function is as follows. E-Cad/CTF2 promotes non-amyloidogenic degradation of Abeta precursors. Has a strong inhibitory effect on APP C99 and C83 production. This chain is Cadherin-1 (Cdh1), found in Rattus norvegicus (Rat).